Reading from the N-terminus, the 536-residue chain is Subtilisin-like proteinase Spm1 (536 aa).

The signal sequence occupies residues 1 to 15; sequence MKSVILLSLAACAVA. The propeptide occupies 16–147; the sequence is APTAGVETIH…RYEEVKKDEC (132 aa). Positions 44-137 constitute an Inhibitor I9 domain; that stretch reads YIIKFKKHVD…IERDTIVHTM (94 aa). Positions 156 to 462 constitute a Peptidase S8 domain; it reads PWGLSRVSHR…GGCSNYFEIV (307 aa). Residues D192 and H224 each act as charge relay system in the active site. N-linked (GlcNAc...) asparagine glycosylation is found at N254 and N294. Residue S390 is the Charge relay system of the active site.

The protein belongs to the peptidase S8 family.

The protein localises to the vacuole. The protein is Subtilisin-like proteinase Spm1 (SPM1) of Pyricularia oryzae (strain 70-15 / ATCC MYA-4617 / FGSC 8958) (Rice blast fungus).